A 45-amino-acid polypeptide reads, in one-letter code: Photosystem II reaction center protein K (45 aa).

Positions 1–8 are excised as a propeptide; it reads MNSALFLA. A helical transmembrane segment spans residues 23–43; that stretch reads ILPVIPVFFLLLAFVWQAAIG.

This sequence belongs to the PsbK family. As to quaternary structure, PSII is composed of 1 copy each of membrane proteins PsbA, PsbB, PsbC, PsbD, PsbE, PsbF, PsbH, PsbI, PsbJ, PsbK, PsbL, PsbM, PsbT, PsbX, PsbY, PsbZ, Psb30/Ycf12, at least 3 peripheral proteins of the oxygen-evolving complex and a large number of cofactors. It forms dimeric complexes.

The protein resides in the plastid. Its subcellular location is the chloroplast thylakoid membrane. One of the components of the core complex of photosystem II (PSII). PSII is a light-driven water:plastoquinone oxidoreductase that uses light energy to abstract electrons from H(2)O, generating O(2) and a proton gradient subsequently used for ATP formation. It consists of a core antenna complex that captures photons, and an electron transfer chain that converts photonic excitation into a charge separation. The sequence is that of Photosystem II reaction center protein K from Pyropia yezoensis (Susabi-nori).